The primary structure comprises 90 residues: Bombyxin D-1 (90 aa).

An N-terminal signal peptide occupies residues 1–18 (MKLLGFFLSWVSVCAIVS). 3 cysteine pairs are disulfide-bonded: cysteine 27–cysteine 77, cysteine 39–cysteine 90, and cysteine 76–cysteine 81. Residues 48 to 68 (SVAHYAGYGWPLLPSLSEERG) constitute a propeptide, c peptide like.

This sequence belongs to the insulin family. As to quaternary structure, heterodimer of a B chain and an A chain linked by two disulfide bonds.

It localises to the secreted. Its function is as follows. Brain peptide responsible for activation of prothoracic glands to produce ecdysone in insects. This chain is Bombyxin D-1 (BBXD1), found in Bombyx mori (Silk moth).